A 30-amino-acid chain; its full sequence is Cyclotide hypa-A (30 aa).

Residues 1–30 (GIPCAESCVYIPCTITALLGCSCKNKVCYN) constitute a cross-link (cyclopeptide (Gly-Asn)). 3 disulfide bridges follow: Cys4-Cys21, Cys8-Cys23, and Cys13-Cys28.

Post-translationally, this is a cyclic peptide.

In terms of biological role, probably participates in a plant defense mechanism. This is Cyclotide hypa-A from Pombalia parviflora (Violetilla).